The following is a 209-amino-acid chain: Probable glutathione peroxidase 8-A (209 aa).

The helical transmembrane segment at 18 to 40 (VSVVFLSMLLCTGILCVLQLGFL) threads the bilayer. Cys-79 is an active-site residue.

This sequence belongs to the glutathione peroxidase family.

The protein localises to the membrane. It catalyses the reaction 2 glutathione + H2O2 = glutathione disulfide + 2 H2O. The chain is Probable glutathione peroxidase 8-A (gpx8-a) from Xenopus laevis (African clawed frog).